Reading from the N-terminus, the 401-residue chain is MKYDHILVRFGEISTKGKNRKKFIEKLRQHIRFVLKDFVALKYASDRDRITIMLNGEDPEPISEQLKGVFGIQSFSLAVKCETNLDAIKEAALTAVQEVYEQGNTFKVSTKRSYKQFELDSNEMNREIGGHVLRNTENLTVNVKQPDVHLRIEIREQATYITFKDVKGAGGLPVGSSGRAMLMLSGGFDSPVAGYQAMKRGIQIEAVHFFSPPYTSERAKQKVIDLTECLAAYGGEIKLHIVPFTKIQELIHKQVPENYTMTSTRRMMLKIADKIREKRDALAIITGESLGQVASQTLESMYAINHVTNTPIIRPLIAVDKNDIIDEARRIGTYETSIQPFEDCCTIFTPPSPKTKPKLEKVERYESFADFEPMLDEAVEQIETIIVKNEKKAADEFADLF.

The 106-residue stretch at Glu-60–Asp-165 folds into the THUMP domain. Residues Met-183–Leu-184, His-208–Phe-209, Arg-265, Gly-287, and Gln-296 contribute to the ATP site.

This sequence belongs to the ThiI family.

The protein resides in the cytoplasm. The enzyme catalyses [ThiI sulfur-carrier protein]-S-sulfanyl-L-cysteine + a uridine in tRNA + 2 reduced [2Fe-2S]-[ferredoxin] + ATP + H(+) = [ThiI sulfur-carrier protein]-L-cysteine + a 4-thiouridine in tRNA + 2 oxidized [2Fe-2S]-[ferredoxin] + AMP + diphosphate. The catalysed reaction is [ThiS sulfur-carrier protein]-C-terminal Gly-Gly-AMP + S-sulfanyl-L-cysteinyl-[cysteine desulfurase] + AH2 = [ThiS sulfur-carrier protein]-C-terminal-Gly-aminoethanethioate + L-cysteinyl-[cysteine desulfurase] + A + AMP + 2 H(+). It functions in the pathway cofactor biosynthesis; thiamine diphosphate biosynthesis. Catalyzes the ATP-dependent transfer of a sulfur to tRNA to produce 4-thiouridine in position 8 of tRNAs, which functions as a near-UV photosensor. Also catalyzes the transfer of sulfur to the sulfur carrier protein ThiS, forming ThiS-thiocarboxylate. This is a step in the synthesis of thiazole, in the thiamine biosynthesis pathway. The sulfur is donated as persulfide by IscS. This is Probable tRNA sulfurtransferase from Bacillus pumilus (strain SAFR-032).